The primary structure comprises 1468 residues: DNA polymerase alpha catalytic subunit A (1468 aa).

A compositionally biased stretch (basic and acidic residues) spans 1–12 (MSSKSEKLEKLR). Disordered regions lie at residues 1 to 34 (MSSKSEKLEKLRKLQAARNGTSIDDYEGDESDGD), 71 to 135 (GVEE…KKSI), and 166 to 205 (NLNSSPTSEFKSSIKRVNGNDESSHDAGISKKVKIDPDSS). Residue Ser-2 is modified to N-acetylserine. A Phosphoserine modification is found at Ser-31. Positions 71 to 80 (GVEEDWREVD) are enriched in basic and acidic residues. A phosphoserine mark is found at Ser-82, Ser-83, Ser-84, Ser-169, and Ser-170. Residues 166–176 (NLNSSPTSEFK) show a composition bias toward polar residues. Thr-172 carries the phosphothreonine modification. Basic and acidic residues predominate over residues 183–205 (NGNDESSHDAGISKKVKIDPDSS). Ser-240 and Ser-274 each carry phosphoserine. The tract at residues 256-275 (LANPPSAQSLADEEDDEDSD) is disordered. The segment covering 266-275 (ADEEDDEDSD) has biased composition (acidic residues). Phosphothreonine occurs at positions 309 and 313. The interval 813–837 (PDKEGNRSRAQKQRQNEENADAPVN) is disordered. The interval 1246–1381 (KKYFRREGGN…CTGVMRYKYS (136 aa)) is DNA-binding. Positions 1287, 1290, 1314, 1317, 1348, 1353, 1367, and 1372 each coordinate Zn(2+). Residues 1287 to 1317 (CPSCDKRFPFGGIVSSNYYRVSYNGLQCKHC) form a CysA-type zinc finger. Residues 1348-1372 (CDDSTCGIVTRQVSVFGKRCLNDGC) carry the CysB motif motif.

This sequence belongs to the DNA polymerase type-B family. DNA polymerase alpha:primase is a four subunit enzyme complex, which is assembled throughout the cell cycle, and consists of the two DNA polymerase subunits A POL1 and B POL12, and the DNA primase large PRI2 and small PRI1 subunits. Subunit B POL12 binds to subunit A POL1. POL1 interacts with CDC13, POB3, SPT16 and MCM10.

It is found in the nucleus. It catalyses the reaction DNA(n) + a 2'-deoxyribonucleoside 5'-triphosphate = DNA(n+1) + diphosphate. In terms of biological role, catalytic component of DNA polymerase alpha, which in complex with DNA primase (DNA polymerase alpha:primase) constitutes a replicative polymerase. POL1 has a role in promoting telomere replication during interaction with CDC13. This chain is DNA polymerase alpha catalytic subunit A (POL1), found in Saccharomyces cerevisiae (strain ATCC 204508 / S288c) (Baker's yeast).